Reading from the N-terminus, the 151-residue chain is Transcriptional repressor NrdR (151 aa).

The segment at 3–34 is a zinc-finger region; that stretch reads CPFCSSDNTRVIDSRPADDNSSIRRRRLCDDC. The ATP-cone domain maps to 49–139; sequence LIVIKKDNNR…VYREFKDVNT (91 aa).

Belongs to the NrdR family. Requires Zn(2+) as cofactor.

In terms of biological role, negatively regulates transcription of bacterial ribonucleotide reductase nrd genes and operons by binding to NrdR-boxes. This chain is Transcriptional repressor NrdR, found in Agathobacter rectalis (strain ATCC 33656 / DSM 3377 / JCM 17463 / KCTC 5835 / VPI 0990) (Eubacterium rectale).